Consider the following 85-residue polypeptide: Antibacterial factor-related peptide 1 (85 aa).

Positions 1 to 19 are cleaved as a signal peptide; sequence MLYFCLLLVLLLPNNGVSS.

As to expression, expressed in the pharynx and body wall muscle.

It is found in the secreted. The chain is Antibacterial factor-related peptide 1 from Caenorhabditis elegans.